The chain runs to 350 residues: tRNA uridine(34) hydroxylase (350 aa).

Residues 146–240 (DDPDAVFIDM…YARRARAQGL (95 aa)) form the Rhodanese domain. The active-site Cysteine persulfide intermediate is Cys200. Residues 319–328 (RRRRAGRENG) are compositionally biased toward basic and acidic residues. The segment at 319–350 (RRRRAGRENGNKIFNKSRGRLNSKLSIPDPAE) is disordered.

The protein belongs to the TrhO family.

The enzyme catalyses uridine(34) in tRNA + AH2 + O2 = 5-hydroxyuridine(34) in tRNA + A + H2O. In terms of biological role, catalyzes oxygen-dependent 5-hydroxyuridine (ho5U) modification at position 34 in tRNAs. This Salmonella paratyphi B (strain ATCC BAA-1250 / SPB7) protein is tRNA uridine(34) hydroxylase.